We begin with the raw amino-acid sequence, 236 residues long: NAP1-binding protein 2 (236 aa).

S102 carries the phosphoserine modification. An SH3 domain is found at 110–171; sequence IVNQRAVALY…PEEFVSYIQP (62 aa). Residues S196 and S235 each carry the phosphoserine modification.

In terms of assembly, interacts with PBS2 and PTC1.

It localises to the cytoplasm. Negatively regulates the high-osmolarity glycerol (HOG) pathway through its negative regulation of the HOG1 kinase activity. Mediates the binding between the PTC1 phosphatase and the PBS2 MAP/ERK kinase (MEK). With PTC1, regulates endoplasmic reticulum inheritance through the cell wall integrity (CWI) MAPK pathway by modulating the MAPK, SLT2. This is NAP1-binding protein 2 (NBP2) from Saccharomyces cerevisiae (strain ATCC 204508 / S288c) (Baker's yeast).